The sequence spans 179 residues: Large ribosomal subunit protein uL6 (179 aa).

The protein belongs to the universal ribosomal protein uL6 family. Part of the 50S ribosomal subunit.

In terms of biological role, this protein binds to the 23S rRNA, and is important in its secondary structure. It is located near the subunit interface in the base of the L7/L12 stalk, and near the tRNA binding site of the peptidyltransferase center. This chain is Large ribosomal subunit protein uL6, found in Alkaliphilus metalliredigens (strain QYMF).